A 148-amino-acid chain; its full sequence is Protein J1 homolog (148 aa).

The protein belongs to the chordopoxvirinae J1 family. In terms of assembly, homodimer. Part of a complex composed of A30, G7, F10 kinase, A15, D2, D3, and J1. Interacts with A45.

It localises to the virion. It is found in the host cytoplasm. Late protein which is a part of a large complex required for early virion morphogenesis. This complex participates in the formation of virosomes and the incorporation of virosomal contents into nascent immature virions. J1 protein is required for DNA packaging during immature virions (IV) formation. This chain is Protein J1 homolog, found in Fowlpox virus (strain NVSL) (FPV).